Consider the following 444-residue polypeptide: Glutamate-1-semialdehyde 2,1-aminomutase (444 aa).

Lys-278 carries the post-translational modification N6-(pyridoxal phosphate)lysine.

The protein belongs to the class-III pyridoxal-phosphate-dependent aminotransferase family. HemL subfamily. In terms of assembly, homodimer. Pyridoxal 5'-phosphate serves as cofactor.

It localises to the cytoplasm. The enzyme catalyses (S)-4-amino-5-oxopentanoate = 5-aminolevulinate. The protein operates within porphyrin-containing compound metabolism; protoporphyrin-IX biosynthesis; 5-aminolevulinate from L-glutamyl-tRNA(Glu): step 2/2. The polypeptide is Glutamate-1-semialdehyde 2,1-aminomutase (Deinococcus radiodurans (strain ATCC 13939 / DSM 20539 / JCM 16871 / CCUG 27074 / LMG 4051 / NBRC 15346 / NCIMB 9279 / VKM B-1422 / R1)).